The primary structure comprises 467 residues: Serine/threonine-protein phosphatase 2A 56 kDa regulatory subunit epsilon isoform (467 aa).

A disordered region spans residues 1-40 (MSSAPTTPPSVDKVDGFSRKSVRKARQKRSQSSSQFRSQG). The residue at position 2 (S2) is an N-acetylserine. Phosphothreonine is present on T7. Positions 20–29 (KSVRKARQKR) are enriched in basic residues. S30, S32, and S34 each carry phosphoserine. Low complexity predominate over residues 30–40 (SQSSSQFRSQG).

It belongs to the phosphatase 2A regulatory subunit B56 family. As to quaternary structure, found in a complex with at least ARL2, PPP2CB; PPP2R1A, PPP2R2A, PPP2R5E and TBCD. PP2A consists of a common heterodimeric core enzyme, composed of a 36 kDa catalytic subunit (subunit C) and a 65 kDa constant regulatory subunit (PR65 or subunit A), that associates with a variety of regulatory subunits. Proteins that associate with the core dimer include three families of regulatory subunits B (the R2/B/PR55/B55, R3/B''/PR72/PR130/PR59 and R5/B'/B56 families), the 48 kDa variable regulatory subunit, viral proteins, and cell signaling molecules. Interacts with SGO1. In terms of processing, phosphorylated on serine residues.

It localises to the cytoplasm. Functionally, the B regulatory subunit might modulate substrate selectivity and catalytic activity, and might also direct the localization of the catalytic enzyme to a particular subcellular compartment. The polypeptide is Serine/threonine-protein phosphatase 2A 56 kDa regulatory subunit epsilon isoform (PPP2R5E) (Homo sapiens (Human)).